Reading from the N-terminus, the 332-residue chain is MALSRALRCCQRIFSWIPVIIISSVVLWSYYAYVFELCFVTLSNNLERVTYLLIFHVCFIMFCWTYWKAIFTPPSTPTKKFHLSYTDKERYEMEERPEVQKQILVDIAKKLPIFTRAQSGAIRFCDRCQVIKPDRCHHCSVCETCVLKMDHHCPWVNNCVGFSNYKFFLLFLSYSMIYCVFIASTVFQYFLKFWVGDLPNGPAKFHVLFLLFVALMFFVSLMFLFGYHCWLVAKNRSTLEAFSPPVFQNGPDRNGFNVGLSKNLRQVFGEHKKLWFIPVFTSQGDGHYFPLRTLRESENPLLANEEKWVEDGGSDEESADENGSSLLIRTES.

Topologically, residues M1–F14 are cytoplasmic. A helical transmembrane segment spans residues S15–F35. Over E36–T50 the chain is Lumenal. A helical transmembrane segment spans residues Y51 to F71. Over T72–K166 the chain is Cytoplasmic. Residues R123 to S173 form the DHHC domain. Zn(2+) is bound by residues C125 and C128. Residue K132 participates in substrate binding. H138, C139, C142, C145, and H152 together coordinate Zn(2+). C153 (S-palmitoyl cysteine intermediate) is an active-site residue. Zn(2+) is bound at residue C159. The chain crosses the membrane as a helical span at residues F167–F187. Topologically, residues Q188–K204 are lumenal. The chain crosses the membrane as a helical span at residues F205 to H228. The Cytoplasmic segment spans residues C229–S332. The tract at residues E305–S332 is disordered.

Belongs to the DHHC palmitoyltransferase family. Post-translationally, autopalmitoylated (in vitro).

It localises to the golgi apparatus membrane. It is found in the postsynaptic density. The catalysed reaction is L-cysteinyl-[protein] + hexadecanoyl-CoA = S-hexadecanoyl-L-cysteinyl-[protein] + CoA. The enzyme catalyses L-cysteinyl-[protein] + tetradecanoyl-CoA = S-tetradecanoyl-L-cysteinyl-[protein] + CoA. It carries out the reaction L-cysteinyl-[protein] + octadecanoyl-CoA = S-octadecanoyl-L-cysteinyl-[protein] + CoA. Functionally, palmitoyltransferase that catalyzes the addition of palmitate onto various protein substrates. Has no stringent fatty acid selectivity and in addition to palmitate can also transfer onto target proteins myristate from tetradecanoyl-CoA and stearate from octadecanoyl-CoA. May thereby regulate target proteins association and localization to membranes. In the nervous system, probably catalyzes the palmitoylation of synaptic proteins and is involved in the differentiation of dopaminergic neurons and the development of the diencephalon. The sequence is that of Palmitoyltransferase ZDHHC15B (zdhhc15b) from Danio rerio (Zebrafish).